The following is a 238-amino-acid chain: Large ribosomal subunit protein uL1 (238 aa).

This sequence belongs to the universal ribosomal protein uL1 family. In terms of assembly, part of the 50S ribosomal subunit.

Functionally, binds directly to 23S rRNA. The L1 stalk is quite mobile in the ribosome, and is involved in E site tRNA release. In terms of biological role, protein L1 is also a translational repressor protein, it controls the translation of the L11 operon by binding to its mRNA. The chain is Large ribosomal subunit protein uL1 from Salinispora tropica (strain ATCC BAA-916 / DSM 44818 / JCM 13857 / NBRC 105044 / CNB-440).